The primary structure comprises 726 residues: A-type inclusion protein A25 homolog (726 aa).

The tract at residues 342 to 361 (TNTGIEEPHATGGDKEDQPI) is disordered. Residues 347-360 (EEPHATGGDKEDQP) show a composition bias toward basic and acidic residues. Residues 426-713 (TELEEAKRKL…ERQLNDCRRN (288 aa)) are 4 X approximate tandem repeats. Tandem repeats lie at residues 612–634 (RELE…CTRN), 639–661 (QEVD…CIES), 667–689 (TEIS…CRGN), and 691–713 (TEIS…CRRN).

It belongs to the poxviridae A25 protein family. In terms of assembly, interacts (via N-terminus) with protein A26.

The protein localises to the virion. Functionally, structural protein that forms a matrix surrounding the mature virion (MV) through interaction with protein A26. Presence of protein A25 in the virion structurally prevents direct virus-cell fusion mechanism. This chain is A-type inclusion protein A25 homolog, found in Camelus.